The primary structure comprises 346 residues: Flap endonuclease 1 (346 aa).

The tract at residues 1 to 100 is N-domain; it reads MGVDIKELVE…KELERRYQIK (100 aa). Residues Asp-29, Asp-82, Glu-154, Glu-156, Asp-175, Asp-177, and Asp-238 each contribute to the Mg(2+) site. The I-domain stretch occupies residues 118-260; that stretch reads EARIYAQQTS…KALKLVKELK (143 aa). The segment at 336-344 is interaction with PCNA; that stretch reads KQQSLESWF.

It belongs to the XPG/RAD2 endonuclease family. FEN1 subfamily. Interacts with PCNA. PCNA stimulates the nuclease activity without altering cleavage specificity. Mg(2+) serves as cofactor.

Structure-specific nuclease with 5'-flap endonuclease and 5'-3' exonuclease activities involved in DNA replication and repair. During DNA replication, cleaves the 5'-overhanging flap structure that is generated by displacement synthesis when DNA polymerase encounters the 5'-end of a downstream Okazaki fragment. Binds the unpaired 3'-DNA end and kinks the DNA to facilitate 5' cleavage specificity. Cleaves one nucleotide into the double-stranded DNA from the junction in flap DNA, leaving a nick for ligation. Also involved in the base excision repair (BER) pathway. Acts as a genome stabilization factor that prevents flaps from equilibrating into structures that lead to duplications and deletions. Also possesses 5'-3' exonuclease activity on nicked or gapped double-stranded DNA. The sequence is that of Flap endonuclease 1 from Thermofilum pendens (strain DSM 2475 / Hrk 5).